The chain runs to 319 residues: tRNA dimethylallyltransferase (319 aa).

Gly-26–Ser-33 contributes to the ATP binding site. Residue Thr-28–Ser-33 coordinates substrate. Positions Asp-51–Gln-54 are interaction with substrate tRNA.

This sequence belongs to the IPP transferase family. As to quaternary structure, monomer. The cofactor is Mg(2+).

The catalysed reaction is adenosine(37) in tRNA + dimethylallyl diphosphate = N(6)-dimethylallyladenosine(37) in tRNA + diphosphate. Its function is as follows. Catalyzes the transfer of a dimethylallyl group onto the adenine at position 37 in tRNAs that read codons beginning with uridine, leading to the formation of N6-(dimethylallyl)adenosine (i(6)A). This chain is tRNA dimethylallyltransferase, found in Salinispora tropica (strain ATCC BAA-916 / DSM 44818 / JCM 13857 / NBRC 105044 / CNB-440).